An 802-amino-acid polypeptide reads, in one-letter code: Threonine--tRNA ligase 2, cytoplasmic (802 aa).

Ala2 carries the post-translational modification N-acetylalanine. 2 coiled-coil regions span residues Ala3–Arg23 and Ala76–Ala96. Positions Glu86–Ala98 are enriched in low complexity. The tract at residues Glu86–Glu123 is disordered. The segment covering Gln106–Glu123 has biased composition (basic and acidic residues). The TGS domain occupies Asp157–Thr222. Ser453 carries the phosphoserine modification. The Nuclear localization signal signature appears at Lys786–Lys792.

This sequence belongs to the class-II aminoacyl-tRNA synthetase family. As to quaternary structure, may be a component of the multisynthetase complex (MSC), a large multi-subunit complex which contains at least eight different aminoacyl-tRNA synthetases plus three auxillary subunits AIMP1, AIMP2 and EEF1E1. Interacts with the MSC components EPRS1, AIMP1, AIMP2 and KARS1.

It localises to the cytoplasm. The protein localises to the nucleus. The catalysed reaction is tRNA(Thr) + L-threonine + ATP = L-threonyl-tRNA(Thr) + AMP + diphosphate + H(+). Its function is as follows. Catalyzes the attachment of threonine to tRNA(Thr) in a two-step reaction: threonine is first activated by ATP to form Thr-AMP and then transferred to the acceptor end of tRNA(Thr). Also edits incorrectly charged tRNA(Thr) via its editing domain, at the post-transfer stage. The sequence is that of Threonine--tRNA ligase 2, cytoplasmic from Homo sapiens (Human).